The following is a 431-amino-acid chain: Hydroxylamine reductase (431 aa).

[4Fe-4S] cluster-binding residues include Cys5, Cys8, Cys17, and Cys23. The hybrid [4Fe-2O-2S] cluster site is built by His131, Glu155, Cys199, Cys286, Cys314, Cys339, Glu373, and Lys375. Position 286 is a cysteine persulfide (Cys286).

It belongs to the HCP family. Requires [4Fe-4S] cluster as cofactor. Hybrid [4Fe-2O-2S] cluster is required as a cofactor.

The protein resides in the cytoplasm. It carries out the reaction A + NH4(+) + H2O = hydroxylamine + AH2 + H(+). In terms of biological role, catalyzes the reduction of hydroxylamine to form NH(3) and H(2)O. The sequence is that of Hydroxylamine reductase from Thermotoga maritima (strain ATCC 43589 / DSM 3109 / JCM 10099 / NBRC 100826 / MSB8).